The sequence spans 576 residues: Phosphoenolpyruvate-protein phosphotransferase (576 aa).

Histidine 189 serves as the catalytic Tele-phosphohistidine intermediate. Phosphoenolpyruvate-binding residues include arginine 296 and arginine 332. Glutamate 431 and aspartate 455 together coordinate Mg(2+). Residues 454-455 (ND) and arginine 465 each bind phosphoenolpyruvate. The active-site Proton donor is cysteine 502.

It belongs to the PEP-utilizing enzyme family. Homodimer. It depends on Mg(2+) as a cofactor.

The protein resides in the cytoplasm. It catalyses the reaction L-histidyl-[protein] + phosphoenolpyruvate = N(pros)-phospho-L-histidyl-[protein] + pyruvate. In terms of biological role, general (non sugar-specific) component of the phosphoenolpyruvate-dependent sugar phosphotransferase system (sugar PTS). This major carbohydrate active-transport system catalyzes the phosphorylation of incoming sugar substrates concomitantly with their translocation across the cell membrane. Enzyme I transfers the phosphoryl group from phosphoenolpyruvate (PEP) to the phosphoryl carrier protein (HPr). In Buchnera aphidicola subsp. Baizongia pistaciae (strain Bp), this protein is Phosphoenolpyruvate-protein phosphotransferase (ptsI).